The chain runs to 66 residues: Conotoxin Cal5.2 (66 aa).

Positions 1–20 (MMYCLPVVCILLLLIPSSAT) are cleaved as a signal peptide. Residues 21 to 51 (FVVESRLEKDQAQSFTGDAWKRVSPIHEMIQ) constitute a propeptide that is removed on maturation. The residue at position 65 (Val65) is a Valine amide.

It belongs to the conotoxin T superfamily. In terms of processing, contains 2 disulfide bonds that can be either 'C1-C3, C2-C4' or 'C1-C4, C2-C3', since these disulfide connectivities have been observed for conotoxins with cysteine framework V (for examples, see AC P0DQQ7 and AC P81755). As to expression, expressed by the venom duct.

The protein localises to the secreted. Functionally, probable neurotoxin with unknown target. Possibly targets ion channels. The protein is Conotoxin Cal5.2 of Californiconus californicus (California cone).